The sequence spans 342 residues: Forkhead box protein D5-C (342 aa).

Residues Met-1–Gly-89 are disordered. Residues Ser-20–Pro-34 are compositionally biased toward acidic residues. Polar residues predominate over residues Ser-59–Ser-70. Basic and acidic residues predominate over residues Ser-71–Leu-83. The fork-head DNA-binding region spans Lys-97 to Lys-191.

In terms of tissue distribution, at the onset of gastrulation, expressed in the superficial layer of cells in the dorsal blastopore lip (Spemann organizer). In the open neural plate, expressed in a row of cells destined to become the floor plate of the neural tube. After neural tube closure, only detected in the tailtip and a small area located at the midbrain/hindbrain boundary.

It is found in the nucleus. Its function is as follows. Transcriptional repressor. This chain is Forkhead box protein D5-C (foxd5-c), found in Xenopus laevis (African clawed frog).